Here is a 308-residue protein sequence, read N- to C-terminus: Type II restriction enzyme MamI (308 aa).

The catalysed reaction is Endonucleolytic cleavage of DNA to give specific double-stranded fragments with terminal 5'-phosphates.. Its function is as follows. A P subtype restriction enzyme that recognizes the double-stranded sequence 5'-GATNNNNATC-3' and cleaves after N-5. This chain is Type II restriction enzyme MamI, found in Microbacterium ammoniaphilum.